Here is a 1140-residue protein sequence, read N- to C-terminus: Chromosome partition protein Smc (1140 aa).

Proline 34–asparagine 41 serves as a coordination point for ATP. Residues valine 160–serine 484 adopt a coiled-coil conformation. Positions glutamate 502 to leucine 619 constitute an SMC hinge domain. Residues leucine 660–phenylalanine 990 are a coiled coil.

It belongs to the SMC family. In terms of assembly, homodimer.

The protein localises to the cytoplasm. Required for chromosome condensation and partitioning. The sequence is that of Chromosome partition protein Smc from Thermoplasma acidophilum (strain ATCC 25905 / DSM 1728 / JCM 9062 / NBRC 15155 / AMRC-C165).